Here is a 138-residue protein sequence, read N- to C-terminus: Small ribosomal subunit protein uS11c (138 aa).

Positions 1–23 (MAKPILRIGSRKNTRSGSRKNVR) are disordered. The segment covering 9–23 (GSRKNTRSGSRKNVR) has biased composition (basic residues).

Belongs to the universal ribosomal protein uS11 family. As to quaternary structure, part of the 30S ribosomal subunit.

The protein localises to the plastid. It is found in the chloroplast. This chain is Small ribosomal subunit protein uS11c, found in Barbarea verna (Land cress).